We begin with the raw amino-acid sequence, 910 residues long: Protein translocase subunit SecA (910 aa).

ATP-binding positions include Gln-89, 107–111 (GEGKT), and Asp-502. The Zn(2+) site is built by Cys-894, Cys-896, Cys-905, and His-906.

The protein belongs to the SecA family. In terms of assembly, monomer and homodimer. Part of the essential Sec protein translocation apparatus which comprises SecA, SecYEG and auxiliary proteins SecDF-YajC and YidC. Zn(2+) serves as cofactor.

Its subcellular location is the cell inner membrane. It is found in the cytoplasm. It carries out the reaction ATP + H2O + cellular proteinSide 1 = ADP + phosphate + cellular proteinSide 2.. Functionally, part of the Sec protein translocase complex. Interacts with the SecYEG preprotein conducting channel. Has a central role in coupling the hydrolysis of ATP to the transfer of proteins into and across the cell membrane, serving both as a receptor for the preprotein-SecB complex and as an ATP-driven molecular motor driving the stepwise translocation of polypeptide chains across the membrane. The sequence is that of Protein translocase subunit SecA from Mesorhizobium japonicum (strain LMG 29417 / CECT 9101 / MAFF 303099) (Mesorhizobium loti (strain MAFF 303099)).